We begin with the raw amino-acid sequence, 293 residues long: uncharacterized protein (293 aa).

7 helical membrane-spanning segments follow: residues 55–75, 77–97, 110–130, 138–158, 164–184, 193–213, and 226–246; these read FLLCLGLVLAFPHLKGTVFLC, TGFMPPLSLMVPTICLALLHG, PGLLTIYSVLTTLSVIVASAC, FSGLLACVLFSLCSCVTGLAG, WQVIVTLFVIGVIAFLIALYL, LFLGYYAMALSFMLVVTVFDT, and LLTLCLYENLVYLYLLILILF. N287 carries an N-linked (GlcNAc...) asparagine; by host glycan.

It belongs to the cytomegalovirus US12 family.

The protein resides in the membrane. This is an uncharacterized protein from Human cytomegalovirus (strain AD169) (HHV-5).